The following is a 165-amino-acid chain: Growth arrest and DNA damage-inducible protein GADD45 alpha (165 aa).

Position 2 is a phosphothreonine (threonine 2).

This sequence belongs to the GADD45 family. In terms of assembly, interacts with AURKA, GADD45GIP1 and PCNA. Interacts with MAPK14.

The protein localises to the nucleus. Its function is as follows. Might affect PCNA interaction with some CDK (cell division protein kinase) complexes; stimulates DNA excision repair in vitro and inhibits entry of cells into S phase. In T-cells, functions as a regulator of p38 MAPKs by inhibiting p88 phosphorylation and activity. The polypeptide is Growth arrest and DNA damage-inducible protein GADD45 alpha (Gadd45a) (Mus musculus (Mouse)).